The sequence spans 152 residues: MSPAIAVEIKRLPHAEGLPLPAYQSAHAAGLDLCAANSADAPLSLAPGCHMLVPTGLCIALPPNYEAQVRPRSGLAAKHGVTVLNAPGTIDADYRGEIGVLLINHGKEPFTIRRGERIAQMIIAPVVRAELISVETLSETARGVGGFGSTGR.

Residues R72–G74, N85, and T89–D91 contribute to the substrate site.

Belongs to the dUTPase family. Mg(2+) is required as a cofactor.

It carries out the reaction dUTP + H2O = dUMP + diphosphate + H(+). The protein operates within pyrimidine metabolism; dUMP biosynthesis; dUMP from dCTP (dUTP route): step 2/2. Its function is as follows. This enzyme is involved in nucleotide metabolism: it produces dUMP, the immediate precursor of thymidine nucleotides and it decreases the intracellular concentration of dUTP so that uracil cannot be incorporated into DNA. The polypeptide is Deoxyuridine 5'-triphosphate nucleotidohydrolase (Rhodopseudomonas palustris (strain HaA2)).